We begin with the raw amino-acid sequence, 851 residues long: ESF1 homolog (851 aa).

Ser2 carries the N-acetylserine modification. Disordered stretches follow at residues 74 to 134 (LSDS…LDNS), 148 to 328 (IDSN…EESG), and 542 to 576 (SSSE…KDDE). Ser75, Ser77, Ser79, and Ser82 each carry phosphoserine. Residues 90–100 (SQKKIKKKKTQ) show a composition bias toward basic residues. The segment covering 101–131 (TKKEIDSKNLVEKKKETKKANHKGSENKTDL) has biased composition (basic and acidic residues). Ser134 and Ser153 each carry phosphoserine. Positions 154–165 (PKKDSKEFTQKN) are enriched in basic and acidic residues. A phosphoserine mark is found at Ser179, Ser180, and Ser198. Residues 197–210 (KSPRIECSKTRREM) show a composition bias toward basic and acidic residues. 2 stretches are compositionally biased toward acidic residues: residues 238 to 257 (ALEE…ESEN) and 268 to 295 (DDDG…DDDK). A phosphoserine mark is found at Ser296 and Ser298. Thr311 is subject to Phosphothreonine. Residues Ser312 and Ser313 each carry the phosphoserine modification. Acidic residues-rich tracts occupy residues 312–324 (SSED…DLFP) and 544–563 (SEDE…VNVE). The segment covering 564–573 (EDGKTKKSQK) has biased composition (basic and acidic residues). Ser614 bears the Phosphoserine mark. Residues 640–650 (KEKKRLKRKQK) show a composition bias toward basic residues. Positions 640 to 667 (KEKKRLKRKQKALAEEASEEELPSDVDL) are disordered. Positions 655-667 (EASEEELPSDVDL) are enriched in acidic residues. Phosphoserine is present on residues Ser657 and Ser663. The residue at position 693 (Thr693) is a Phosphothreonine. 3 positions are modified to phosphoserine: Ser694, Ser735, and Ser823. A coiled-coil region spans residues 730–824 (EHQNLSKKKK…IEKESQRKSI (95 aa)). A compositionally biased stretch (basic and acidic residues) spans 794–824 (ARQRERKEQELTQAIKKKESEIEKESQRKSI). Residues 794-827 (ARQRERKEQELTQAIKKKESEIEKESQRKSIDPA) form a disordered region.

The protein belongs to the ESF1 family. As to quaternary structure, interacts with ABT1. Forms a complex with ABT1 and suppresses the ABT1-induced activation of polymerase II-directed transcription in mammalian cells.

It localises to the nucleus. The protein resides in the nucleolus. It is found in the nucleoplasm. Its function is as follows. May constitute a novel regulatory system for basal transcription. Negatively regulates ABT1. In Homo sapiens (Human), this protein is ESF1 homolog (ESF1).